The primary structure comprises 267 residues: N-formylglutamate deformylase (267 aa).

This sequence belongs to the N-formylglutamate deformylase family. As to quaternary structure, monomer.

It catalyses the reaction N-formyl-L-glutamate + H2O = formate + L-glutamate. Its pathway is amino-acid degradation; L-histidine degradation into L-glutamate; L-glutamate from N-formimidoyl-L-glutamate (deiminase route): step 2/2. Its activity is regulated as follows. Stimulated by Co(2+). Fe(2+) is also a good activator, particularly at lower concentrations, but it inhibits slightly the activity when used at concentrations over 0.1 mM. Other divalent metals tested (Cd(2+), Ca(2+), Mn(2+), Zn(2+), Ni(2+) and Mg(2+)) are not effective activators. Catalyzes the hydrolysis of N-formyl-L-glutamate to formate and L-glutamate. This chain is N-formylglutamate deformylase, found in Pseudomonas putida (Arthrobacter siderocapsulatus).